A 3065-amino-acid polypeptide reads, in one-letter code: MAX gene-associated protein (3065 aa).

Glycyl lysine isopeptide (Lys-Gly) (interchain with G-Cter in SUMO2) cross-links involve residues K4 and K178. The T-box DNA-binding region spans 84 to 260 (MWNEFYHRST…YNPFAKGFRD (177 aa)). Over residues 259–277 (RDDGLNNKPQRDGKQKNSS) the composition is skewed to basic and acidic residues. The segment at 259–322 (RDDGLNNKPQ…GHETSGKGLE (64 aa)) is disordered. Over residues 278 to 289 (DQEGNNISSSSG) the composition is skewed to polar residues. Residues 309 to 322 (PLSRGHETSGKGLE) show a composition bias toward basic and acidic residues. Glycyl lysine isopeptide (Lys-Gly) (interchain with G-Cter in SUMO2) cross-links involve residues K323, K329, K349, K432, K460, K465, and K482. A Phosphoserine modification is found at S534. A Glycyl lysine isopeptide (Lys-Gly) (interchain with G-Cter in SUMO2) cross-link involves residue K570. The tract at residues 604-653 (QNASPNVPGKRGRPRKLKLCKAGRPPKNTGKSLISTKNTPVSPGSTFPDV) is disordered. A Phosphoserine modification is found at S607. Residue K613 forms a Glycyl lysine isopeptide (Lys-Gly) (interchain with G-Cter in SUMO2) linkage. Positions 613 to 624 (KRGRPRKLKLCK) are enriched in basic residues. Positions 632 to 648 (TGKSLISTKNTPVSPGS) are enriched in polar residues. Position 645 is a phosphoserine (S645). Glycyl lysine isopeptide (Lys-Gly) (interchain with G-Cter in SUMO2) cross-links involve residues K654, K785, K791, K817, and K826. Phosphoserine is present on S851. Positions 881 to 911 (STSYSLKPHSVPPVSRKAKSQNRQATFSGRT) are disordered. Residues 901 to 911 (QNRQATFSGRT) are compositionally biased toward polar residues. Phosphoserine is present on S924. A Glycyl lysine isopeptide (Lys-Gly) (interchain with G-Cter in SUMO2) cross-link involves residue K928. The interval 971–990 (RQAQQQQQQQQGSRPPGLSK) is disordered. Residues 972–981 (QAQQQQQQQQ) show a composition bias toward low complexity. Glycyl lysine isopeptide (Lys-Gly) (interchain with G-Cter in SUMO2) cross-links involve residues K990, K1091, K1140, K1162, K1199, and K1207. Residues 1111 to 1147 (YDTLGEEAREEEEGIREEEEQLKEKKKRKKLEYTICE) are a coiled coil. S1208 is modified (phosphoserine). Disordered regions lie at residues 1246-1332 (RKKE…PGGP) and 1380-1429 (RKSR…MEDI). 2 stretches are compositionally biased toward low complexity: residues 1253–1269 (QPSS…QQTS) and 1310–1322 (KSSC…SSTS). A phosphoserine mark is found at S1430 and S1457. Glycyl lysine isopeptide (Lys-Gly) (interchain with G-Cter in SUMO2) cross-links involve residues K1461 and K1502. 3 disordered regions span residues 1488–1517 (SRKP…PGKN), 1905–1927 (SPPE…YSSG), and 1967–2029 (QMKR…EDRG). Composition is skewed to polar residues over residues 1495–1514 (LPST…TNRP) and 1911–1927 (SFAS…YSSG). Basic and acidic residues predominate over residues 1968 to 1994 (MKRESQNPDQKDETNSIKREQETKKVL). Glycyl lysine isopeptide (Lys-Gly) (interchain with G-Cter in SUMO2) cross-links involve residues K1985 and K1992. Residues 2008–2023 (IKQNSGAATSEETLND) are compositionally biased toward polar residues. Residues K2103, K2113, K2135, K2139, K2146, K2159, K2194, K2206, and K2238 each participate in a glycyl lysine isopeptide (Lys-Gly) (interchain with G-Cter in SUMO2) cross-link. The tract at residues 2258–2316 (RRAAKSSRGNGHFQGHLLLPGEQIQPKQEKKGGRSSADFTVLDLEEDDEDDNEKTDDSI) is disordered. Position 2265 is an omega-N-methylarginine (R2265). Residue K2284 forms a Glycyl lysine isopeptide (Lys-Gly) (interchain with G-Cter in SUMO2) linkage. The span at 2300 to 2316 (DLEEDDEDDNEKTDDSI) shows a compositional bias: acidic residues. Glycyl lysine isopeptide (Lys-Gly) (interchain with G-Cter in SUMO2) cross-links involve residues K2378, K2413, K2457, and K2532. The region spanning 2423–2474 (YYRRTHTANERRRRGEMRDLFEKLKITLGLLHSSKVSKSLILTRAFSEIQGL) is the bHLH domain. Residue S2541 is modified to Phosphoserine. K2546 participates in a covalent cross-link: Glycyl lysine isopeptide (Lys-Gly) (interchain with G-Cter in SUMO2). Residues 2576–2595 (KKDQATENTSPLNTPHTSAN) form a disordered region. Over residues 2581–2595 (TENTSPLNTPHTSAN) the composition is skewed to polar residues. Residues K2629, K2679, K2698, and K2784 each participate in a glycyl lysine isopeptide (Lys-Gly) (interchain with G-Cter in SUMO2) cross-link. The segment at 2668-2709 (GSKYPHEVPDSKPSDHLKDTVRNEDNSLEDKGRISSRGNRDG) is disordered. Residues 2671 to 2709 (YPHEVPDSKPSDHLKDTVRNEDNSLEDKGRISSRGNRDG) show a composition bias toward basic and acidic residues. A coiled-coil region spans residues 2817–2841 (DDTDETLTSLLNEIAFLNQQLNDDS). Phosphoserine occurs at positions 2910 and 2921. Positions 2944 to 2968 (AIDGGKNTSGLPAEPESVSSPPTLH) are disordered. The residue at position 2978 (S2978) is a Phosphoserine. Residue K3041 forms a Glycyl lysine isopeptide (Lys-Gly) (interchain with G-Cter in SUMO2) linkage.

Interacts with MAX. Requires dimerization with MAX for E-box binding. Component of some MLL1/MLL complex, at least composed of the core components KMT2A/MLL1, ASH2L, HCFC1/HCF1, WDR5 and RBBP5, as well as the facultative components BACC1, CHD8, E2F6, HSP70, INO80C, KANSL1, LAS1L, MAX, MCRS1, MGA, MYST1/MOF, PELP1, PHF20, PRP31, RING2, RUVB1/TIP49A, RUVB2/TIP49B, SENP3, TAF1, TAF4, TAF6, TAF7, TAF9 and TEX10. Interacts with ZMYND11. In terms of tissue distribution, highly expressed in germ cells and granulosa cells.

The protein resides in the nucleus. Its function is as follows. Functions as a dual-specificity transcription factor, regulating the expression of both MAX-network and T-box family target genes. Functions as a repressor or an activator. Binds to 5'-AATTTCACACCTAGGTGTGAAATT-3' core sequence and seems to regulate MYC-MAX target genes. Suppresses transcriptional activation by MYC and inhibits MYC-dependent cell transformation. Function activated by heterodimerization with MAX. This heterodimerization serves the dual function of both generating an E-box-binding heterodimer and simultaneously blocking interaction of a corepressor. This is MAX gene-associated protein from Homo sapiens (Human).